The chain runs to 133 residues: Large ribosomal subunit protein eL19 (133 aa).

Positions 55-83 are disordered; sequence RGISGARKKPRRKGPGSRKGGKYSKLPRK. A compositionally biased stretch (basic residues) spans 60–83; the sequence is ARKKPRRKGPGSRKGGKYSKLPRK.

It belongs to the eukaryotic ribosomal protein eL19 family. As to quaternary structure, part of the 50S ribosomal subunit.

Its function is as follows. Binds to the 23S rRNA. In Korarchaeum cryptofilum (strain OPF8), this protein is Large ribosomal subunit protein eL19.